The following is a 159-amino-acid chain: Putative UPF0479 protein YDR545C-A (159 aa).

Transmembrane regions (helical) follow at residues 38 to 58 (IVFC…KVLQ) and 135 to 155 (VPMI…ISQH).

It belongs to the UPF0479 family.

Its subcellular location is the membrane. The chain is Putative UPF0479 protein YDR545C-A from Saccharomyces cerevisiae (strain ATCC 204508 / S288c) (Baker's yeast).